Reading from the N-terminus, the 274-residue chain is Proteasome subunit beta (274 aa).

Positions 1 to 52 are cleaved as a propeptide — removed in mature form; by autocatalysis; the sequence is MADPLGAAGRLPAVFMTPGTSSFADFLSRSAPHLLPGARSGLPGPVTEVAHG. The active-site Nucleophile is Thr-53.

This sequence belongs to the peptidase T1B family. In terms of assembly, the 20S proteasome core is composed of 14 alpha and 14 beta subunits that assemble into four stacked heptameric rings, resulting in a barrel-shaped structure. The two inner rings, each composed of seven catalytic beta subunits, are sandwiched by two outer rings, each composed of seven alpha subunits. The catalytic chamber with the active sites is on the inside of the barrel. Has a gated structure, the ends of the cylinder being occluded by the N-termini of the alpha-subunits. Is capped by the proteasome-associated ATPase, ARC.

It localises to the cytoplasm. The catalysed reaction is Cleavage of peptide bonds with very broad specificity.. The protein operates within protein degradation; proteasomal Pup-dependent pathway. Its activity is regulated as follows. The formation of the proteasomal ATPase ARC-20S proteasome complex, likely via the docking of the C-termini of ARC into the intersubunit pockets in the alpha-rings, may trigger opening of the gate for substrate entry. Interconversion between the open-gate and close-gate conformations leads to a dynamic regulation of the 20S proteasome proteolysis activity. Functionally, component of the proteasome core, a large protease complex with broad specificity involved in protein degradation. The polypeptide is Proteasome subunit beta (Frankia casuarinae (strain DSM 45818 / CECT 9043 / HFP020203 / CcI3)).